The chain runs to 289 residues: Thiazole synthase (289 aa).

Lys-132 acts as the Schiff-base intermediate with DXP in catalysis. Residues Gly-193, Ala-219–Gly-220, and Asn-241–Thr-242 each bind 1-deoxy-D-xylulose 5-phosphate.

It belongs to the ThiG family. Homotetramer. Forms heterodimers with either ThiH or ThiS.

The protein localises to the cytoplasm. The enzyme catalyses [ThiS sulfur-carrier protein]-C-terminal-Gly-aminoethanethioate + 2-iminoacetate + 1-deoxy-D-xylulose 5-phosphate = [ThiS sulfur-carrier protein]-C-terminal Gly-Gly + 2-[(2R,5Z)-2-carboxy-4-methylthiazol-5(2H)-ylidene]ethyl phosphate + 2 H2O + H(+). It participates in cofactor biosynthesis; thiamine diphosphate biosynthesis. Functionally, catalyzes the rearrangement of 1-deoxy-D-xylulose 5-phosphate (DXP) to produce the thiazole phosphate moiety of thiamine. Sulfur is provided by the thiocarboxylate moiety of the carrier protein ThiS. In vitro, sulfur can be provided by H(2)S. This chain is Thiazole synthase, found in Rhodospirillum rubrum (strain ATCC 11170 / ATH 1.1.1 / DSM 467 / LMG 4362 / NCIMB 8255 / S1).